A 63-amino-acid chain; its full sequence is Cytochrome c oxidase subunit 5C-1 (63 aa).

A helical membrane pass occupies residues 15–34; the sequence is SEVKELIIGSVLGLAAGGLW.

Belongs to the cytochrome c oxidase subunit 5C family.

Its subcellular location is the mitochondrion inner membrane. Functionally, this protein is one of the nuclear-coded polypeptide chains of cytochrome c oxidase, the terminal oxidase in mitochondrial electron transport. This chain is Cytochrome c oxidase subunit 5C-1 (COX5C1), found in Helianthus annuus (Common sunflower).